We begin with the raw amino-acid sequence, 411 residues long: D-galactonate dehydratase family member SBI_01856 (411 aa).

Substrate contacts are provided by Asn-45 and His-130. Tyr-167 acts as the Proton donor/acceptor in catalysis. Residue Asp-219 coordinates Mg(2+). The active-site Proton donor/acceptor is the His-221. Mg(2+) contacts are provided by Glu-245 and Glu-271. Substrate contacts are provided by Glu-271, Arg-292, His-321, Asp-325, and Glu-348.

This sequence belongs to the mandelate racemase/muconate lactonizing enzyme family. GalD subfamily. It depends on Mg(2+) as a cofactor.

It catalyses the reaction D-gluconate = 2-dehydro-3-deoxy-D-gluconate + H2O. Functionally, has low D-gluconate dehydratase activity (in vitro), suggesting that it has no significant role in D-gluconate degradation in vivo. Has no detectable activity with a panel of 70 other acid sugars (in vitro). In Streptomyces bingchenggensis (strain BCW-1), this protein is D-galactonate dehydratase family member SBI_01856.